The following is a 173-amino-acid chain: Lipid A deacylase PagL (173 aa).

Positions 1-23 (MKKLLPLAVLAALSSVHVASAQA) are cleaved as a signal peptide. Topologically, residues 25 to 28 (DVSA) are periplasmic. Residues 29 to 32 (AVGA) form a beta stranded membrane-spanning segment. Threonine 33 is a topological domain (periplasmic). A beta stranded transmembrane segment spans residues 34–49 (GQSGMTYRLGLSWDWD). Residues 50-56 (KSWWQTS) lie on the Extracellular side of the membrane. A beta stranded transmembrane segment spans residues 57-71 (TGRLTGYWDAGYTYW). The Periplasmic portion of the chain corresponds to 72 to 73 (EG). A beta stranded membrane pass occupies residues 74–89 (GDEGAGKHSLSFAPVF). Valine 90 is a topological domain (extracellular). Residues 91–93 (YEF) form a beta stranded membrane-spanning segment. The Periplasmic segment spans residues 94 to 95 (AG). The beta stranded transmembrane segment at 96 to 98 (DSI) threads the bilayer. Over 99–100 (KP) the chain is Extracellular. A beta stranded membrane pass occupies residues 101–115 (FIEAGIGVAAFSGTR). Residues 116-117 (VG) are Periplasmic-facing. A beta stranded transmembrane segment spans residues 118–128 (DQNLGSSLNFE). Residues 129-138 (DRIGAGLKFA) lie on the Extracellular side of the membrane. A beta stranded transmembrane segment spans residues 139–148 (NGQSVGVRAI). Active-site charge relay system residues include histidine 149, serine 151, and glutamate 163. The Periplasmic portion of the chain corresponds to 149-173 (HYSNAGLKQPNDGIESYSLFYKIPI).

Belongs to the PagL family. In terms of assembly, homodimer.

It is found in the cell outer membrane. It catalyses the reaction a 3-(acyloxy)acyl derivative of bacterial toxin + H2O = a 3-hydroxyacyl derivative of bacterial toxin + a fatty acid + H(+). Its activity is regulated as follows. Decreased activity at low temperatures (15 or 21 degrees Celsius). Functionally, has lipid A 3-O-deacylase activity. Hydrolyzes the ester bond at the 3 position of lipid A, a bioactive component of lipopolysaccharide (LPS), thereby releasing the primary fatty acyl moiety. Lacks fatty acyl chain-length specificity as removes both 3-OH C10 and 3-OH C14 fatty acids from lipid A. The protein is Lipid A deacylase PagL of Pseudomonas aeruginosa (strain ATCC 15692 / DSM 22644 / CIP 104116 / JCM 14847 / LMG 12228 / 1C / PRS 101 / PAO1).